We begin with the raw amino-acid sequence, 229 residues long: Large ribosomal subunit protein uL4 (229 aa).

The segment at 62 to 103 is disordered; the sequence is SRRQGTHQVKNRAAVSGSGKKPWKQKGTGRARHSSRRSPIWV. The segment covering 82-97 has biased composition (basic residues); the sequence is KPWKQKGTGRARHSSR.

This sequence belongs to the universal ribosomal protein uL4 family. As to quaternary structure, part of the 50S ribosomal subunit.

In terms of biological role, one of the primary rRNA binding proteins, this protein initially binds near the 5'-end of the 23S rRNA. It is important during the early stages of 50S assembly. It makes multiple contacts with different domains of the 23S rRNA in the assembled 50S subunit and ribosome. Forms part of the polypeptide exit tunnel. The chain is Large ribosomal subunit protein uL4 from Mycoplasmopsis synoviae (strain 53) (Mycoplasma synoviae).